The sequence spans 275 residues: Transmembrane protein 45A (275 aa).

5 helical membrane passes run 7–27 (HALP…KSIL), 51–71 (ILEG…EQFI), 100–120 (FFFG…SLPV), 150–170 (IFVH…AFLE), and 218–238 (ILFL…IVGM).

Belongs to the TMEM45 family.

It is found in the membrane. The chain is Transmembrane protein 45A (TMEM45A) from Homo sapiens (Human).